The following is a 320-amino-acid chain: Cytochrome f (320 aa).

The N-terminal stretch at 1–35 (MQTRKTLSWIKEEITRSISLSLMLSIITHASLSNA) is a signal peptide. Heme is bound by residues Y36, C56, C59, and H60. A helical membrane pass occupies residues 286–306 (VQGLLFFLTSVLLAQIFLVLK).

It belongs to the cytochrome f family. As to quaternary structure, the 4 large subunits of the cytochrome b6-f complex are cytochrome b6, subunit IV (17 kDa polypeptide, petD), cytochrome f and the Rieske protein, while the 4 small subunits are PetG, PetL, PetM and PetN. The complex functions as a dimer. The cofactor is heme.

The protein resides in the plastid. It is found in the chloroplast thylakoid membrane. Functionally, component of the cytochrome b6-f complex, which mediates electron transfer between photosystem II (PSII) and photosystem I (PSI), cyclic electron flow around PSI, and state transitions. The sequence is that of Cytochrome f from Pelargonium hortorum (Common geranium).